A 341-amino-acid chain; its full sequence is Anthranilate phosphoribosyltransferase (341 aa).

Residues Gly-79, 82–83 (GD), Thr-87, 89–92 (NIST), 107–115 (KHGNRAVSS), and Ser-119 each bind 5-phospho-alpha-D-ribose 1-diphosphate. Gly-79 provides a ligand contact to anthranilate. Ser-91 is a Mg(2+) binding site. Position 110 (Asn-110) interacts with anthranilate. Arg-165 contacts anthranilate. The Mg(2+) site is built by Asp-224 and Glu-225.

This sequence belongs to the anthranilate phosphoribosyltransferase family. In terms of assembly, homodimer. Mg(2+) is required as a cofactor.

It catalyses the reaction N-(5-phospho-beta-D-ribosyl)anthranilate + diphosphate = 5-phospho-alpha-D-ribose 1-diphosphate + anthranilate. Its pathway is amino-acid biosynthesis; L-tryptophan biosynthesis; L-tryptophan from chorismate: step 2/5. Catalyzes the transfer of the phosphoribosyl group of 5-phosphorylribose-1-pyrophosphate (PRPP) to anthranilate to yield N-(5'-phosphoribosyl)-anthranilate (PRA). This chain is Anthranilate phosphoribosyltransferase, found in Bacillus cereus (strain ATCC 14579 / DSM 31 / CCUG 7414 / JCM 2152 / NBRC 15305 / NCIMB 9373 / NCTC 2599 / NRRL B-3711).